We begin with the raw amino-acid sequence, 122 residues long: Ribonuclease P protein component (122 aa).

It belongs to the RnpA family. In terms of assembly, consists of a catalytic RNA component (M1 or rnpB) and a protein subunit.

The enzyme catalyses Endonucleolytic cleavage of RNA, removing 5'-extranucleotides from tRNA precursor.. In terms of biological role, RNaseP catalyzes the removal of the 5'-leader sequence from pre-tRNA to produce the mature 5'-terminus. It can also cleave other RNA substrates such as 4.5S RNA. The protein component plays an auxiliary but essential role in vivo by binding to the 5'-leader sequence and broadening the substrate specificity of the ribozyme. This Lactobacillus gasseri (strain ATCC 33323 / DSM 20243 / BCRC 14619 / CIP 102991 / JCM 1131 / KCTC 3163 / NCIMB 11718 / NCTC 13722 / AM63) protein is Ribonuclease P protein component.